A 277-amino-acid polypeptide reads, in one-letter code: Phosphate import ATP-binding protein PstB 2 (277 aa).

Residues 31 to 272 (IEVPGLNLFY…PAKKQTEDYI (242 aa)) enclose the ABC transporter domain. ATP is bound at residue 63-70 (GPSGCGKS).

The protein belongs to the ABC transporter superfamily. Phosphate importer (TC 3.A.1.7) family. As to quaternary structure, the complex is composed of two ATP-binding proteins (PstB), two transmembrane proteins (PstC and PstA) and a solute-binding protein (PstS).

The protein localises to the cell inner membrane. It carries out the reaction phosphate(out) + ATP + H2O = ADP + 2 phosphate(in) + H(+). In terms of biological role, part of the ABC transporter complex PstSACB involved in phosphate import. Responsible for energy coupling to the transport system. The chain is Phosphate import ATP-binding protein PstB 2 from Pseudomonas syringae pv. syringae (strain B728a).